The primary structure comprises 689 residues: Chloride channel protein ClC-Kb (689 aa).

At 1 to 51 (MSRVLVIEQREGEEKTLIQKHIFRPFPNTRRVVIDHLQRLKNFLFRIGDDW) the chain is on the cytoplasmic side. A run of 2 helical transmembrane segments spans residues 52–83 (YFLF…RWLQ) and 92–112 (LRYL…TGFA). Residues 117 to 128 (PHSGGSGIPELK) constitute an intramembrane region (helical). Ser122 serves as a coordination point for chloride. 2 helical membrane-spanning segments follow: residues 142–161 (IKNF…AGST) and 162–181 (MFLG…AAYL). The N-linked (GlcNAc...) asparagine glycan is linked to Asn194. The segment at residues 204-225 (AAAAVGVSTVFGAPISGVLFSV) is an intramembrane region (helical). A helical membrane pass occupies residues 237-256 (YWRGFFAATCGAFVFRLLAV). Ca(2+) contacts are provided by Glu260, Glu262, Asp279, and Glu282. 2 helical membrane-spanning segments follow: residues 283 to 311 (MFFF…LGYV) and 326 to 343 (PMYS…TFPE). Residues 350-361 (ASRLTMKELLTS) constitute an intramembrane region (helical). The next 2 membrane-spanning stretches (helical) occupy residues 402–422 (GTLA…TTLP) and 423–442 (MPAG…GRLV). Chloride is bound at residue Phe428. The segment at residues 466 to 498 (GGYAWQGAPAYSGAVTHSVSTALLAFEATGQIA) is an intramembrane region (helical). A helical transmembrane segment spans residues 502-522 (PVILCVLIANAFTQKLQPSFY). Topologically, residues 523–689 (DGTIIVKKLP…KAIEDLANPK (167 aa)) are cytoplasmic. CBS domains are found at residues 553–613 (MNPD…SHER) and 630–689 (ACSI…ANPK).

The protein belongs to the chloride channel (TC 2.A.49) family. N-glycosylated on a single asparagine, probably Asn-365 or Asn-375. As to expression, expressed in two distinct regions of the kidney; the proximal convoluted tubule and the diluting segment.

Its subcellular location is the cell membrane. Its function is as follows. Voltage-gated chloride channel. Chloride channels have several functions including the regulation of cell volume, the stabilization of membrane potential, signal transduction and transepithelial transport. In Xenopus laevis (African clawed frog), this protein is Chloride channel protein ClC-Kb (clcnkb).